Consider the following 247-residue polypeptide: Golgi-associated RAB2 interactor protein 5A (247 aa).

The span at 1–16 shows a compositional bias: pro residues; that stretch reads MGPPLWPDLQEPPPPG. Disordered regions lie at residues 1–22 and 60–92; these read MGPP…SQIR and GDIA…PTGR.

Belongs to the GARIN family. As to quaternary structure, interacts (via N-terminus) with RAB2B (in GTP-bound form).

It is found in the golgi apparatus. In terms of biological role, RAB2B effector protein which promotes cytosolic DNA-induced innate immune responses. Regulates IFN responses against DNA viruses by regulating the CGAS-STING signaling axis. This is Golgi-associated RAB2 interactor protein 5A from Homo sapiens (Human).